The chain runs to 118 residues: Small ribosomal subunit protein eS24 (118 aa).

This sequence belongs to the eukaryotic ribosomal protein eS24 family.

This is Small ribosomal subunit protein eS24 from Sulfolobus acidocaldarius (strain ATCC 33909 / DSM 639 / JCM 8929 / NBRC 15157 / NCIMB 11770).